Reading from the N-terminus, the 523-residue chain is MQLPRELKYAAIAGGVALFGLIFGWVLFPTILKSQLKKEMALSKKTDVRKMWEKIPFALDFKVYIFNFTNAEEVQKGATPILKEIGPYHFDEWKEKVEVEDHEEDDTITYKKRDVFYFNPEMSAPGLTGEEIVVIPHIFMLGMALTVARDKPAMLNMVGKAMNGIFDDPPDIFLRVKALDILFRGMIINCARTEFAPKATCTALKKEGVSGLVLEPNNQFRFSIFGTRNNTIDPHVITVKRGITSVMDVGQVVAVDGKTEQTIWRDTCNEFQGTDGTVFPPFVPETERIESFSTDLCRTFKPWYQKKTSYRGIKTNRYIANIGDFANDPELNCYCAKPDTCPPKGLMDLAPCMKAPMYASMPHFLDSDPALLSKVKGLNPDVTQHGIEIDYEPITGTPMVAKQRIQFNIQLLKTDKLDLFKDLSGDIVPLFWIDEGLALNKTFVNMLKHQLFIPKRVVGVLRWWMVSFGSLGAVIGIVFHFRDHIMRLAVSGDTKVSKVTPEEEEQKDISVIGQAQEPAKVNI.

The Cytoplasmic portion of the chain corresponds to 1–11; it reads MQLPRELKYAA. The chain crosses the membrane as a helical span at residues 12 to 32; sequence IAGGVALFGLIFGWVLFPTIL. Over 33–458 the chain is Extracellular; sequence KSQLKKEMAL…HQLFIPKRVV (426 aa). Residues Asn-67 and Asn-229 are each glycosylated (N-linked (GlcNAc...) asparagine). 3 cysteine pairs are disulfide-bonded: Cys-268/Cys-333, Cys-297/Cys-352, and Cys-335/Cys-341. The N-linked (GlcNAc...) asparagine glycan is linked to Asn-440. A helical membrane pass occupies residues 459–479; the sequence is GVLRWWMVSFGSLGAVIGIVF. Residues 480-523 lie on the Cytoplasmic side of the membrane; sequence HFRDHIMRLAVSGDTKVSKVTPEEEEQKDISVIGQAQEPAKVNI.

It belongs to the CD36 family.

It localises to the cell membrane. Plays an olfactory role that is not restricted to pheromone sensitivity. The protein is Sensory neuron membrane protein 1 of Helicoverpa armigera (Cotton bollworm).